Consider the following 398-residue polypeptide: MVPAIPETPVRKFNINFGPQHPAAHGVLRLVLELDGEIVERVDPHIGLLHRGTEKLMEARTYLQNIPYFDRLDYVAPMNQEHAFCLAIEKLLGVEVPIRGQIIRVLYSEIGRILNHLLNVTTQAMDVGALTPPLWGFEEREKLMVFYERACGARLHSNYFRPGGVHQDLPPELVEDIDTWAKAFPKICDDIEGLITDNRIFKQRNVDIGVVSKEEAISWGFSGVMVRGSGIAWDLRRSQPYENYNDFEFDIPLGKNGDCYDRYLCRMQEMRESTKIIRQACEMLRKTHGPVLSEDNKVAPPRRAEMKRSMEALIHHFKLYTEGFKTPAGEVYACVEAPKGEFGVFVVSDGTNKPYRCKIRAPGFPHLAAMDWMNRGHQLADVSAILGSLDIVFGEIDR.

It belongs to the complex I 49 kDa subunit family. In terms of assembly, NDH-1 is composed of 14 different subunits. Subunits NuoB, C, D, E, F, and G constitute the peripheral sector of the complex.

The protein localises to the cell inner membrane. The catalysed reaction is a quinone + NADH + 5 H(+)(in) = a quinol + NAD(+) + 4 H(+)(out). Functionally, NDH-1 shuttles electrons from NADH, via FMN and iron-sulfur (Fe-S) centers, to quinones in the respiratory chain. The immediate electron acceptor for the enzyme in this species is believed to be ubiquinone. Couples the redox reaction to proton translocation (for every two electrons transferred, four hydrogen ions are translocated across the cytoplasmic membrane), and thus conserves the redox energy in a proton gradient. This Caulobacter vibrioides (strain ATCC 19089 / CIP 103742 / CB 15) (Caulobacter crescentus) protein is NADH-quinone oxidoreductase subunit D.